An 862-amino-acid chain; its full sequence is Valine--tRNA ligase (862 aa).

The 'HIGH' region motif lies at 47–57; that stretch reads PTASGSLHIGH. Positions 110-130 are disordered; sequence EPGLTPPFEGGDNKSSKAADQ. The segment covering 120–129 has biased composition (basic and acidic residues); sequence GDNKSSKAAD. The 'KMSKS' region motif lies at 584 to 588; sequence KMSKS. ATP is bound at residue K587.

The protein belongs to the class-I aminoacyl-tRNA synthetase family. ValS type 2 subfamily. Monomer.

The protein localises to the cytoplasm. It carries out the reaction tRNA(Val) + L-valine + ATP = L-valyl-tRNA(Val) + AMP + diphosphate. Catalyzes the attachment of valine to tRNA(Val). As ValRS can inadvertently accommodate and process structurally similar amino acids such as threonine, to avoid such errors, it has a 'posttransfer' editing activity that hydrolyzes mischarged Thr-tRNA(Val) in a tRNA-dependent manner. The polypeptide is Valine--tRNA ligase (Leifsonia xyli subsp. xyli (strain CTCB07)).